The sequence spans 1464 residues: Alpha-glucan water dikinase, chloroplastic (1464 aa).

The N-terminal 77 residues, 1–77 (MSNSLGNNLL…KRAFSSSPHA (77 aa)), are a transit peptide targeting the chloroplast. His-1069 serves as the catalytic Tele-phosphohistidine intermediate.

The protein belongs to the PEP-utilizing enzyme family. In terms of assembly, homodimer. It depends on Mg(2+) as a cofactor. In terms of tissue distribution, expressed in leaves.

It is found in the plastid. The protein localises to the chloroplast. It carries out the reaction [(1-&gt;4)-alpha-D-glucosyl](n) + n ATP + n H2O = [(1-&gt;4)-6-phospho-alpha-D-glucosyl](n) + n AMP + n phosphate + 2n H(+). It catalyses the reaction ATP + protein L-histidine = ADP + protein N-phospho-L-histidine.. Mediates the incorporation of phosphate into starch-like alpha-glucan, mostly at the C-6 position of glucose units. Acts as an overall regulator of starch mobilization. Required for starch degradation, suggesting that the phosphate content of starch regulates its degradability. More active on alpha-1,6 branched amylopectin. In Solanum tuberosum (Potato), this protein is Alpha-glucan water dikinase, chloroplastic (R1).